The sequence spans 112 residues: Putative acyl carrier protein, mitochondrial (112 aa).

A mitochondrion-targeting transit peptide spans 1–28 (MLSRFSSQLRFISAVRPVIPKFQPLRFY). The Carrier domain maps to 33 to 109 (PDAEKRILKV…DAISYITKNP (77 aa)). Position 69 is an O-(pantetheine 4'-phosphoryl)serine (Ser-69).

It belongs to the acyl carrier protein (ACP) family. In terms of processing, 4'-phosphopantetheine is transferred from CoA to a specific serine of apo-ACP by acpS. This modification is essential for activity because fatty acids are bound in thioester linkage to the sulfhydryl of the prosthetic group.

It is found in the mitochondrion. It participates in lipid metabolism; fatty acid biosynthesis. Functionally, carrier of the growing fatty acid chain in fatty acid biosynthesis. May be involved in the synthesis of very-long-chain fatty acids. The protein is Putative acyl carrier protein, mitochondrial of Schizosaccharomyces pombe (strain 972 / ATCC 24843) (Fission yeast).